Here is a 319-residue protein sequence, read N- to C-terminus: Cobalamin biosynthesis protein CobD (319 aa).

Helical transmembrane passes span 56 to 76 (VMWL…LALA), 78 to 98 (GIHP…ALAG), 153 to 173 (VDGI…LAMA), 204 to 224 (VANF…AVLC), and 296 to 316 (LMWV…YWLV).

This sequence belongs to the CobD/CbiB family.

Its subcellular location is the cell membrane. The protein operates within cofactor biosynthesis; adenosylcobalamin biosynthesis. Its function is as follows. Converts cobyric acid to cobinamide by the addition of aminopropanol on the F carboxylic group. The polypeptide is Cobalamin biosynthesis protein CobD (Klebsiella pneumoniae subsp. pneumoniae (strain ATCC 700721 / MGH 78578)).